The sequence spans 110 residues: Ribonuclease P protein component 1 (110 aa).

This sequence belongs to the eukaryotic/archaeal RNase P protein component 1 family. In terms of assembly, consists of a catalytic RNA component and at least 4-5 protein subunits.

It is found in the cytoplasm. The enzyme catalyses Endonucleolytic cleavage of RNA, removing 5'-extranucleotides from tRNA precursor.. Part of ribonuclease P, a protein complex that generates mature tRNA molecules by cleaving their 5'-ends. This Methanosarcina mazei (strain ATCC BAA-159 / DSM 3647 / Goe1 / Go1 / JCM 11833 / OCM 88) (Methanosarcina frisia) protein is Ribonuclease P protein component 1.